Consider the following 64-residue polypeptide: Large ribosomal subunit protein bL35 (64 aa).

The protein belongs to the bacterial ribosomal protein bL35 family.

This is Large ribosomal subunit protein bL35 from Shewanella sediminis (strain HAW-EB3).